We begin with the raw amino-acid sequence, 186 residues long: Ribosome-recycling factor (186 aa).

This sequence belongs to the RRF family.

It is found in the cytoplasm. Responsible for the release of ribosomes from messenger RNA at the termination of protein biosynthesis. May increase the efficiency of translation by recycling ribosomes from one round of translation to another. The polypeptide is Ribosome-recycling factor (Bordetella petrii (strain ATCC BAA-461 / DSM 12804 / CCUG 43448)).